Reading from the N-terminus, the 599-residue chain is Sulfite reductase [NADPH] flavoprotein alpha-component (599 aa).

Residues 64–202 (ITIISASQTG…AASEWRARVV (139 aa)) enclose the Flavodoxin-like domain. Residues 70–75 (SQTGNA), 117–120 (STQG), and 153–162 (LGDSSYEFFC) each bind FMN. An FAD-binding FR-type domain is found at 234–448 (DAPLVASLSV…IEHNDNFRLP (215 aa)). FAD is bound by residues Thr-322, Ala-356, 386 to 389 (RLYS), 404 to 406 (TVG), Tyr-410, and 419 to 422 (GGAS). NADP(+) contacts are provided by residues 519–520 (SR), 525–529 (KVYVQ), and Asp-561. Residue Tyr-599 participates in FAD binding.

It belongs to the NADPH-dependent sulphite reductase flavoprotein subunit CysJ family. This sequence in the N-terminal section; belongs to the flavodoxin family. In the C-terminal section; belongs to the flavoprotein pyridine nucleotide cytochrome reductase family. In terms of assembly, alpha(8)-beta(8). The alpha component is a flavoprotein, the beta component is a hemoprotein. Requires FAD as cofactor. The cofactor is FMN.

It carries out the reaction hydrogen sulfide + 3 NADP(+) + 3 H2O = sulfite + 3 NADPH + 4 H(+). The protein operates within sulfur metabolism; hydrogen sulfide biosynthesis; hydrogen sulfide from sulfite (NADPH route): step 1/1. Its function is as follows. Component of the sulfite reductase complex that catalyzes the 6-electron reduction of sulfite to sulfide. This is one of several activities required for the biosynthesis of L-cysteine from sulfate. The flavoprotein component catalyzes the electron flow from NADPH -&gt; FAD -&gt; FMN to the hemoprotein component. In Shigella flexneri serotype 5b (strain 8401), this protein is Sulfite reductase [NADPH] flavoprotein alpha-component.